Consider the following 478-residue polypeptide: uncharacterized protein (478 aa).

An RCK N-terminal domain is found at 2 to 120 (MNMITVIGFG…NIDKIINILE (119 aa)).

This is an uncharacterized protein from Methanocaldococcus jannaschii (strain ATCC 43067 / DSM 2661 / JAL-1 / JCM 10045 / NBRC 100440) (Methanococcus jannaschii).